The sequence spans 471 residues: Protoheme IX farnesyltransferase, mitochondrial (471 aa).

Residues 1–60 constitute a mitochondrion transit peptide; it reads MLLSNVAVNRTVVHTQLVSGSRSALHALSRTSHSVPVTHTHQRRHIFSHKRRLSSSTLAI. 6 helical membrane-spanning segments follow: residues 188–208, 247–267, 287–307, 312–332, 368–388, and 430–450; these read AVSLTNLLFLTVGTALCSGSA, ITGTVGTAALYFGVNPTVAIL, IINTWVGAVVGAIPPLMGWAA, LLHPGAWCLAGLLYAWQFPHF, LLMFPLCVGLSYYNVTDWWFV, and KLFWGSVVHLPGVLLLAMIHK.

This sequence belongs to the UbiA prenyltransferase family.

Its subcellular location is the mitochondrion membrane. The enzyme catalyses heme b + (2E,6E)-farnesyl diphosphate + H2O = Fe(II)-heme o + diphosphate. Its function is as follows. Converts protoheme IX and farnesyl diphosphate to heme O. The chain is Protoheme IX farnesyltransferase, mitochondrial (COX10) from Yarrowia lipolytica (strain CLIB 122 / E 150) (Yeast).